A 335-amino-acid polypeptide reads, in one-letter code: Mycobacterial beta-ketoacyl-[acyl-carrier-protein] synthase III (335 aa).

Active-site residues include Cys-122 and His-258. The tract at residues 259–263 (QANSR) is ACP-binding. Asn-289 is a catalytic residue.

The protein belongs to the thiolase-like superfamily. FabH family. In terms of assembly, homodimer.

Its subcellular location is the cytoplasm. The catalysed reaction is malonyl-[ACP] + dodecanoyl-CoA + H(+) = 3-oxotetradecanoyl-[ACP] + CO2 + CoA. It participates in lipid metabolism; fatty acid biosynthesis. It functions in the pathway lipid metabolism; mycolic acid biosynthesis. Its function is as follows. Catalyzes the condensation reaction of fatty acid synthesis by the addition to an acyl acceptor of two carbons from malonyl-ACP. Catalyzes the first condensation reaction which initiates fatty acid synthesis and may therefore play a role in governing the total rate of fatty acid production. Possesses both acetoacetyl-ACP synthase and acetyl transacylase activities. Its substrate specificity determines the biosynthesis of branched-chain and/or straight-chain of fatty acids. This Mycolicibacterium paratuberculosis (strain ATCC BAA-968 / K-10) (Mycobacterium paratuberculosis) protein is Mycobacterial beta-ketoacyl-[acyl-carrier-protein] synthase III.